The sequence spans 642 residues: MPIITLPDGSKREFVNPVSTLDVAADIGPGLAKACIAGRVNGELKDACDLISTDSDLSIITAKDQEGVEILRHSCAHLLGHAVKQMWPEAKMAIGPVIDNGFYYDIDLDHKLTAEDIEALEKRMMDLAKTNYDVVKRVVSWHEARDAFSERGEVYKIAILDENISKDATPALYHHEEYTDMCRGPHVPNMRFCQNFKLMSVAGAYWRGNSDNKMLQRVYGTAWADKKALKTHLTRLEEAAKRDHRKIGKQLDLYHMQEEAPGMVFWHNDGWSLFLELEKFIRQKLGQYTYQEVKGPLMMDRALWERSGHWDKYSDAMFTTNSENREYAIKPMNCPGHVQIFNQGLKSYRDLPLRMAEFGCCHRNEPSGSLHGLMRVRGFTQDDAHIFCTDDQVQKEVSDCIQMVYDTYATFGFENIVVKLSTRPEKRIGDDDMWDRAEEALKQALIANEIEFEILPGEGAFYGPKIEFTLHDCLDRAWQCGTVQLDYALPSRLGATYVAEDNTRQTPVMIHRAILGSLERFLGILIEEYAGKFPTWLAPMQVVVMNITDKQADYVQDVVKIFKEQGIRASFDLRNEKIGFKIREHTLRRVPYLLVVGDQEMENKEVAVRTRDGIDLGKMSIEDFAKKIHKDISSRSLKLLEE.

The 61-residue stretch at 1-61 folds into the TGS domain; the sequence is MPIITLPDGS…STDSDLSIIT (61 aa). The catalytic stretch occupies residues 243-534; the sequence is DHRKIGKQLD…LIEEYAGKFP (292 aa). Cys-334, His-385, and His-511 together coordinate Zn(2+).

The protein belongs to the class-II aminoacyl-tRNA synthetase family. Homodimer. The cofactor is Zn(2+).

Its subcellular location is the cytoplasm. It catalyses the reaction tRNA(Thr) + L-threonine + ATP = L-threonyl-tRNA(Thr) + AMP + diphosphate + H(+). Functionally, catalyzes the attachment of threonine to tRNA(Thr) in a two-step reaction: L-threonine is first activated by ATP to form Thr-AMP and then transferred to the acceptor end of tRNA(Thr). Also edits incorrectly charged L-seryl-tRNA(Thr). This chain is Threonine--tRNA ligase, found in Shewanella denitrificans (strain OS217 / ATCC BAA-1090 / DSM 15013).